Consider the following 70-residue polypeptide: Testis-expressed protein 53 (70 aa).

As to expression, expressed in Testis.

This Homo sapiens (Human) protein is Testis-expressed protein 53.